The primary structure comprises 590 residues: Auxin response factor 20 (590 aa).

Residues 126–224 (FTKVLTASDT…ELRVGIRRAR (99 aa)) constitute a DNA-binding region (TF-B3). In terms of domain architecture, PB1 spans 495–576 (RTCTKVQMQG…MVKKILIYSK (82 aa)).

It belongs to the ARF family. As to quaternary structure, homodimers and heterodimers.

Its subcellular location is the nucleus. Auxin response factors (ARFs) are transcriptional factors that bind specifically to the DNA sequence 5'-TGTCTC-3' found in the auxin-responsive promoter elements (AuxREs). Could act as transcriptional activator or repressor. Formation of heterodimers with Aux/IAA proteins may alter their ability to modulate early auxin response genes expression. This is Auxin response factor 20 (ARF20) from Arabidopsis thaliana (Mouse-ear cress).